A 64-amino-acid chain; its full sequence is LTCKTCPFNTCANSETCPAGKNICYQKKWEEHRGERIERRCVANCPKLGSNDKSLLCCRRDDCN.

5 disulfides stabilise this stretch: C3-C24, C6-C11, C17-C41, C45-C57, and C58-C63.

Belongs to the three-finger toxin family. Ancestral subfamily. As to expression, expressed by the venom gland.

It localises to the secreted. In terms of biological role, produces peripheral paralysis by blocking neuromuscular transmission at the postsynaptic site. Weak inhibitor of the endogenous nicotinic acetylcholine receptors (nAChR) in the human rhabdomyosarcoma TE 671 cell line with an IC(50) of 690 mM. This neurotoxin is lethal to zebrafish by injection at the back of the dorsolateral region, but is not toxic to mice by intraperitoneal injection. The protein is Long neurotoxin MS4 of Micrurus surinamensis (Surinam coral snake).